The chain runs to 685 residues: Multisite-specific tRNA:(cytosine-C(5))-methyltransferase trm4b (685 aa).

Residues 167-173, aspartate 208, aspartate 235, and aspartate 270 contribute to the S-adenosyl-L-methionine site; that span reads CAAPGSK. Cysteine 323 (nucleophile) is an active-site residue.

This sequence belongs to the class I-like SAM-binding methyltransferase superfamily. RsmB/NOP family. TRM4 subfamily.

The protein resides in the nucleus. It catalyses the reaction cytidine(49) in tRNA precursor + S-adenosyl-L-methionine = 5-methylcytidine(49) in tRNA precursor + S-adenosyl-L-homocysteine + H(+). The catalysed reaction is cytidine(50) in tRNA + S-adenosyl-L-methionine = 5-methylcytidine(50) in tRNA + S-adenosyl-L-homocysteine + H(+). It carries out the reaction cytidine(60) in tRNA(Asp) + S-adenosyl-L-methionine = 5-methylcytidine(60) in tRNA(Asp) + S-adenosyl-L-homocysteine + H(+). The enzyme catalyses cytidine(61) in tRNA(Asp) + S-adenosyl-L-methionine = 5-methylcytidine(61) in tRNA(Asp) + S-adenosyl-L-homocysteine + H(+). It catalyses the reaction cytidine(62) in tRNA(Asp) + S-adenosyl-L-methionine = 5-methylcytidine(62) in tRNA(Asp) + S-adenosyl-L-homocysteine + H(+). Functionally, tRNA cytosine C(5)-methyltransferase that methylates cytosine to 5-methylcytosine (m5C) in tRNAs at position 49 and 50. Trm4a and trm4b methylate different sets of tRNAs. Also methylates cytosine to m5C at positions (60, 61 and 62) in tRNA(Asp). This is Multisite-specific tRNA:(cytosine-C(5))-methyltransferase trm4b from Schizosaccharomyces pombe (strain 972 / ATCC 24843) (Fission yeast).